Reading from the N-terminus, the 309-residue chain is L-2-keto-3-deoxyarabonate dehydratase (309 aa).

Lys171 acts as the Schiff-base intermediate with substrate in catalysis.

Belongs to the DapA family. In terms of assembly, homodimer.

It carries out the reaction 2-dehydro-3-deoxy-L-arabinonate = 2,5-dioxopentanoate + H2O. Its function is as follows. Catalyzes the dehydration of L-2-keto-3-deoxyarabonate (L-KDA) to alpha-ketoglutaric semialdehyde (alphaKGSA). Is involved in a degradation pathway of L-arabinose that allows A.brasilense to grow on L-arabinose as a sole carbon source. The sequence is that of L-2-keto-3-deoxyarabonate dehydratase (araD) from Azospirillum brasilense.